The primary structure comprises 138 residues: Basic phospholipase A2 homolog Vur-S49 (138 aa).

An N-terminal signal peptide occupies residues 1 to 16 (MRALWIVAVCLIGVEG). 7 cysteine pairs are disulfide-bonded: Cys42/Cys131, Cys44/Cys60, Cys59/Cys111, Cys65/Cys138, Cys66/Cys104, Cys73/Cys97, and Cys91/Cys102. Residues 121 to 133 (KKYKVYLRFKCKG) are important for membrane-damaging activities in eukaryotes and bacteria; heparin-binding.

It belongs to the phospholipase A2 family. Group II subfamily. S49 sub-subfamily. As to expression, expressed by the venom gland.

It is found in the secreted. Functionally, snake venom phospholipase A2 homolog that lacks enzymatic activity. Is able to suppress the acetylcholine (ACh)-evoked current mediated by alpha-7 (CHRNA7)-similar nAChRs in L.stagnalis neurons (IC(50)=2.18 uM). This activity is only partially reversible and seems to be non-competitive. The chain is Basic phospholipase A2 homolog Vur-S49 from Vipera renardi (Steppe viper).